A 244-amino-acid polypeptide reads, in one-letter code: MHTPFIVALDFPSKQEVERFLRPFAGTPLFVKVGMELYYQEGPAIVAFLKEQGHAVFLDLKLHDIPNTVKQAMKGLARVGADLVNVHAAGGRRMMEAAIEGLDAGTPSGRMRPRCIAVTQLTSTDERMLHEELWISRPLAETVAHYAALAKESGLDGVVCSANEAAFIKERCGASFLAVTPGIRFADDAAHDQVRVVTPRKARALGSDYIVVGRSLTRAADPLGAYARLQHEWNGGERESTTPT.

Substrate is bound by residues aspartate 10, lysine 32, 59–68 (DLKLHDIPNT), threonine 122, arginine 184, glutamine 193, glycine 213, and arginine 214. Residue lysine 61 is the Proton donor of the active site.

It belongs to the OMP decarboxylase family. Type 1 subfamily. As to quaternary structure, homodimer.

It carries out the reaction orotidine 5'-phosphate + H(+) = UMP + CO2. It participates in pyrimidine metabolism; UMP biosynthesis via de novo pathway; UMP from orotate: step 2/2. Its function is as follows. Catalyzes the decarboxylation of orotidine 5'-monophosphate (OMP) to uridine 5'-monophosphate (UMP). The chain is Orotidine 5'-phosphate decarboxylase from Bacillus caldolyticus.